Consider the following 175-residue polypeptide: FMRFamide-like neuropeptides 1 (175 aa).

Residues 1–21 (MTLLYQVGLLLLVAATYKVSA) form the signal peptide. Positions 22–68 (ECCTPGATSDFCTVFSMLSTMEQNEVMNFIGENCDGDAEVALQKMEK) are excised as a propeptide. Residue Y76 is modified to Tyrosine amide. Residues 79 to 86 (SAAVKSLG) constitute a propeptide that is removed on maturation. Phenylalanine amide occurs at positions 98, 108, 120, 130, 142, and 154. Residues 157 to 165 (SFDNFDRES) constitute a propeptide that is removed on maturation. F173 is subject to Phenylalanine amide.

The protein belongs to the FARP (FMRFamide related peptide) family. May be processed by convertase egl-3. Each flp gene is expressed in a distinct set of neurons. Flp-1 is expressed in the AVA interneurons, the M5 cholinergic pharyngeal motoneurons, and the AIA, AIY, AVE, AVK, RIG and RMG neurons.

The protein resides in the secreted. In terms of biological role, together with flp-18, plays a homeostatic role by acting on the GABAergic neural transmission at neuromuscular junctions to prevent overexcitation of the locomotor circuit. Functionally, inhibits the activity of dissected pharyngeal myogenic muscle system. DPNFLRF-amide: Inhibits the activity of dissected pharyngeal myogenic muscle system. Its function is as follows. Acts as a ligand for the npr-22 receptor in vitro. The polypeptide is FMRFamide-like neuropeptides 1 (flp-1) (Caenorhabditis elegans).